The sequence spans 73 residues: Defensin-like protein 87 (73 aa).

An N-terminal signal peptide occupies residues 1–27; it reads MTTKKTSSVVLPLLLVFALILMPMVAG. 3 disulfides stabilise this stretch: Cys-33/Cys-71, Cys-45/Cys-69, and Cys-49/Cys-70.

Belongs to the DEFL family.

The protein resides in the secreted. The protein is Defensin-like protein 87 of Arabidopsis thaliana (Mouse-ear cress).